The chain runs to 360 residues: DNA replication and repair protein RecF (360 aa).

Residue 30-37 coordinates ATP; that stretch reads GHNGSGKT.

It belongs to the RecF family.

It localises to the cytoplasm. The RecF protein is involved in DNA metabolism; it is required for DNA replication and normal SOS inducibility. RecF binds preferentially to single-stranded, linear DNA. It also seems to bind ATP. This chain is DNA replication and repair protein RecF, found in Shewanella denitrificans (strain OS217 / ATCC BAA-1090 / DSM 15013).